The primary structure comprises 311 residues: MYQLAQSNLWTGRLDSETDPTQFRHFQTVKFGDLSQLDFSDEHKGVGLLGYAIDKGVELNKGRVGAKEGPNAIKRAFAGLPDLNQCEEIIDYGNVEHNHELLIDTQREFADLAAKSIKRHKQTFLLGGGHDIAYAQYLATRKVYPESSIGVINIDAHFDTRDEGYSTSGTSFRQILEEDDNADYLVLGISQGGNTQALFNYAKEKDIQFVYADELLHQVSPPIKDMIERFIHNHDTVMFTICMDVVDSAFAPGVSAPAVLGIYPHTVFELAKRVIPSEKVKSISIAEMNPTYDSDQRTAKLVANLVHHCLI.

Positions 130, 155, 157, 159, 242, and 244 each coordinate Mn(2+).

Belongs to the arginase family. Requires Mn(2+) as cofactor.

It catalyses the reaction N-formimidoyl-L-glutamate + H2O = formamide + L-glutamate. Its pathway is amino-acid degradation; L-histidine degradation into L-glutamate; L-glutamate from N-formimidoyl-L-glutamate (hydrolase route): step 1/1. In terms of biological role, catalyzes the conversion of N-formimidoyl-L-glutamate to L-glutamate and formamide. This chain is Formimidoylglutamase, found in Staphylococcus epidermidis (strain ATCC 35984 / DSM 28319 / BCRC 17069 / CCUG 31568 / BM 3577 / RP62A).